The primary structure comprises 299 residues: Delta-9 desaturase-like 5 protein (299 aa).

2 consecutive transmembrane segments (helical) span residues 31–51 and 55–75; these read ADII…LAPF and WEAL…ITFS. Positions 77–82 match the Histidine box-1 motif; that stretch reads HRNLAH. Residues 114 to 118 carry the Histidine box-2 motif; that stretch reads HRFHH. Helical transmembrane passes span 174 to 194 and 199 to 219; these read IGFH…LPYL and GVGG…CHIW. Positions 246–250 match the Histidine box-3 motif; sequence HNNHH.

It belongs to the fatty acid desaturase type 1 family. Requires Fe cation as cofactor.

The protein localises to the endoplasmic reticulum membrane. Its pathway is lipid metabolism; polyunsaturated fatty acid biosynthesis. The protein is Delta-9 desaturase-like 5 protein of Arabidopsis thaliana (Mouse-ear cress).